A 248-amino-acid polypeptide reads, in one-letter code: 5'-nucleotidase SurE (248 aa).

The a divalent metal cation site is built by D8, D9, S39, and N91.

It belongs to the SurE nucleotidase family. The cofactor is a divalent metal cation.

It localises to the cytoplasm. The catalysed reaction is a ribonucleoside 5'-phosphate + H2O = a ribonucleoside + phosphate. Its function is as follows. Nucleotidase that shows phosphatase activity on nucleoside 5'-monophosphates. The polypeptide is 5'-nucleotidase SurE (Neisseria meningitidis serogroup A / serotype 4A (strain DSM 15465 / Z2491)).